The chain runs to 236 residues: Uridylate kinase (236 aa).

Lys-9–Gly-12 lines the ATP pocket. An involved in allosteric activation by GTP region spans residues Gly-17 to Gly-22. Residue Gly-51 participates in UMP binding. ATP contacts are provided by Gly-52 and Arg-56. Residues Asp-72 and Thr-133–Thr-140 each bind UMP. 3 residues coordinate ATP: Thr-160, Tyr-166, and Asp-169.

It belongs to the UMP kinase family. As to quaternary structure, homohexamer.

The protein resides in the cytoplasm. The catalysed reaction is UMP + ATP = UDP + ADP. It participates in pyrimidine metabolism; CTP biosynthesis via de novo pathway; UDP from UMP (UMPK route): step 1/1. Its activity is regulated as follows. Allosterically activated by GTP. Inhibited by UTP. Catalyzes the reversible phosphorylation of UMP to UDP. The polypeptide is Uridylate kinase (Helicobacter hepaticus (strain ATCC 51449 / 3B1)).